The sequence spans 557 residues: Syntaxin-binding protein 4 (557 aa).

Phosphoserine is present on residues Ser-10 and Ser-12. Residues 19–105 (AFRVITVTKE…RSESPWEIAF (87 aa)) enclose the PDZ domain. Ser-99 bears the Phosphoserine; by PKB/AKT2 mark. Low complexity predominate over residues 142-154 (PSETLLPKTSSTP). Residues 142 to 214 (PSETLLPKTS…SGPQGKISLN (73 aa)) form a disordered region. The span at 179 to 194 (SPITSLDNSPADTSNA) shows a compositional bias: polar residues. Ser-216 carries the post-translational modification Phosphoserine. Residues 298 to 408 (ADEVGKLRQE…NKESVQDLRK (111 aa)) are a coiled coil. Position 467 is a phosphoserine (Ser-467). Residues 500–533 (DCLPYGWEEAYTADGIKYFINHVTQTTSWIHPVM) enclose the WW domain.

In terms of assembly, interacts with STX4A. Phosphorylated on Ser-99 by PKB/AKT2 after insulin treatment. Phosphorylation on Ser-99 abolishes the interaction with STX4A. In terms of tissue distribution, detected in skeletal muscle, heart, testis, adipocytes and pancreatic islet cells.

The protein localises to the cytoplasm. Its function is as follows. Plays a role in the translocation of transport vesicles from the cytoplasm to the plasma membrane. Inhibits the translocation of SLC2A4 from intracellular vesicles to the plasma membrane by STX4A binding and preventing the interaction between STX4A and VAMP2. Stimulation with insulin disrupts the interaction with STX4A, leading to increased levels of SLC2A4 at the plasma membrane. May also play a role in the regulation of insulin release by pancreatic beta cells after stimulation by glucose. In Mus musculus (Mouse), this protein is Syntaxin-binding protein 4 (Stxbp4).